The chain runs to 799 residues: RasGAP-activating-like protein 1 (799 aa).

C2 domains follow at residues 1–105 (MAKS…DSWI) and 116–231 (VQGE…NGWF). The Ca(2+) site is built by Asp-21, Asp-27, Asp-74, Asp-76, Asp-82, Asp-149, Asp-155, Asp-202, Asp-204, and Asp-210. Positions 316-544 (GLAGPFLDYL…SRVRDFLDQL (229 aa)) constitute a Ras-GAP domain. Thr-400 carries the post-translational modification Phosphothreonine. In terms of domain architecture, PH spans 565-672 (TIVREGFLLK…WLSALRKASA (108 aa)). Residues 674–710 (NPGKLVACHPGAFRSGRWTCCLQAERSAAGCSRTHSA) form a Btk-type zinc finger. Zn(2+) contacts are provided by His-682, Cys-693, Cys-694, and Cys-704.

It depends on Ca(2+) as a cofactor.

Functionally, probable inhibitory regulator of the Ras-cyclic AMP pathway. Plays a role in dendrite formation by melanocytes. The chain is RasGAP-activating-like protein 1 from Mus musculus (Mouse).